A 32-amino-acid polypeptide reads, in one-letter code: Alpha-2-macroglobulin homolog (32 aa).

Residues 16–19 (CGEQ) constitute a cross-link (isoglutamyl cysteine thioester (Cys-Gln)).

This sequence belongs to the protease inhibitor I39 (alpha-2-macroglobulin) family. As to quaternary structure, homodimer; disulfide-linked.

Its subcellular location is the secreted. Is able to inhibit all four classes of proteinases by a unique 'trapping' mechanism. This protein has a peptide stretch, called the 'bait region' which contains specific cleavage sites for different proteinases. When a proteinase cleaves the bait region, a conformational change is induced in the protein which traps the proteinase. The entrapped enzyme remains active against low molecular weight substrates (activity against high molecular weight substrates is greatly reduced). Following cleavage in the bait region a thioester bond is hydrolyzed and mediates the covalent binding of the protein to the proteinase. In Pacifastacus leniusculus (Signal crayfish), this protein is Alpha-2-macroglobulin homolog.